The sequence spans 154 residues: IQ domain-containing protein F3 (154 aa).

One can recognise an IQ domain in the interval 89-118 (QEQATVKLQSCIRMWQCRQCYRQMCNALCL).

This Homo sapiens (Human) protein is IQ domain-containing protein F3 (IQCF3).